The sequence spans 387 residues: Phosphoglycerate kinase (387 aa).

Substrate is bound by residues 21–23, Arg36, 59–62, Arg113, and Arg146; these read DLN and HLGR. ATP is bound by residues Lys197, Glu314, and 340–343; that span reads GGDT.

The protein belongs to the phosphoglycerate kinase family. Monomer.

The protein resides in the cytoplasm. The catalysed reaction is (2R)-3-phosphoglycerate + ATP = (2R)-3-phospho-glyceroyl phosphate + ADP. It participates in carbohydrate degradation; glycolysis; pyruvate from D-glyceraldehyde 3-phosphate: step 2/5. The polypeptide is Phosphoglycerate kinase (Yersinia pestis bv. Antiqua (strain Antiqua)).